A 33-amino-acid chain; its full sequence is Phospholipase A2 homolog BmarPLA2 (33 aa).

The protein belongs to the phospholipase A2 family. Group II subfamily. K49 sub-subfamily. In terms of assembly, homodimer; non-covalently linked. Expressed by the venom gland.

The protein localises to the secreted. In terms of biological role, snake phospholipase A2 homolog that lacks enzymatic activity. May display myotoxin activity. In isolated heart decreases cardiac frequency. Also decreases mean arterial pressure. Does not show antimicrobial activity. Does not change renal parameters (such as perfusion pressure, renal vascular resistance, urinary flow, glomerular filtration rate and sodium tubular transport). This is Phospholipase A2 homolog BmarPLA2 from Bothrops marajoensis (Marajo lancehead).